The sequence spans 240 residues: Ubiquinone biosynthesis O-methyltransferase (240 aa).

Arg-44, Gly-64, Asp-85, and Met-129 together coordinate S-adenosyl-L-methionine.

The protein belongs to the methyltransferase superfamily. UbiG/COQ3 family.

The enzyme catalyses a 3-demethylubiquinol + S-adenosyl-L-methionine = a ubiquinol + S-adenosyl-L-homocysteine + H(+). It catalyses the reaction a 3-(all-trans-polyprenyl)benzene-1,2-diol + S-adenosyl-L-methionine = a 2-methoxy-6-(all-trans-polyprenyl)phenol + S-adenosyl-L-homocysteine + H(+). Its pathway is cofactor biosynthesis; ubiquinone biosynthesis. Its function is as follows. O-methyltransferase that catalyzes the 2 O-methylation steps in the ubiquinone biosynthetic pathway. The chain is Ubiquinone biosynthesis O-methyltransferase from Escherichia coli (strain SMS-3-5 / SECEC).